The primary structure comprises 669 residues: Protein BNIP5 (669 aa).

Disordered stretches follow at residues 1 to 116 (MPRS…REAQ), 131 to 259 (IEEP…QDDV), 273 to 401 (QLEE…RASE), and 413 to 544 (LQSA…SPER). The span at 34–47 (RSLDRQVPRKKDPE) shows a compositional bias: basic and acidic residues. The span at 48–73 (SSNTRCPSSATCRRTASDGARSSESP) shows a compositional bias: polar residues. Composition is skewed to basic and acidic residues over residues 104 to 113 (EDTKKERLPR) and 131 to 148 (IEEPREKASRASKGKGDL). Residues 158–175 (RKKSHEKRTSRKKHSHRK) show a composition bias toward basic residues. The span at 285–295 (EAVPPRKPTPL) shows a compositional bias: pro residues. Lysine 314 is covalently cross-linked (Glycyl lysine isopeptide (Lys-Gly) (interchain with G-Cter in SUMO2)). Polar residues predominate over residues 346 to 357 (VSSQRASTSSSL). Basic and acidic residues predominate over residues 390–401 (PEEKPLLDRASE). A compositionally biased stretch (basic residues) spans 445–462 (SQVKKSNLRRAFSLRKHS). Positions 516 to 528 (AAGGAPAGSPGAP) are enriched in low complexity.

The sequence is that of Protein BNIP5 (Bnip5) from Mus musculus (Mouse).